An 843-amino-acid chain; its full sequence is Protein P (843 aa).

Residues 1 to 177 form a terminal protein domain (TP) region; sequence MPLSYQHFRK…FCGSPYSWEQ (177 aa). Positions 178-346 are spacer; that stretch reads ELQHGRLFFK…YCLSHIVNLL (169 aa). Residues 248-272 are disordered; sequence HPTTRQSFGVEPSGSGHIDNSASNS. Residues 347 to 690 are polymerase/reverse transcriptase domain (RT); the sequence is EDWGPCTENG…YLNLYPVARQ (344 aa). The region spanning 357–600 is the Reverse transcriptase domain; sequence EHNIRIPRTP…YSLNFMGYVI (244 aa). Aspartate 429, aspartate 551, and aspartate 552 together coordinate Mg(2+).

It belongs to the hepadnaviridae P protein family.

The enzyme catalyses DNA(n) + a 2'-deoxyribonucleoside 5'-triphosphate = DNA(n+1) + diphosphate. It catalyses the reaction Endonucleolytic cleavage to 5'-phosphomonoester.. Activated by host HSP70 and HSP40 in vitro to be able to bind the epsilon loop of the pgRNA. Because deletion of the RNase H region renders the protein partly chaperone-independent, the chaperones may be needed indirectly to relieve occlusion of the RNA-binding site by this domain. Inhibited by several reverse-transcriptase inhibitors: Lamivudine, Adefovir and Entecavir. Its function is as follows. Multifunctional enzyme that converts the viral RNA genome into dsDNA in viral cytoplasmic capsids. This enzyme displays a DNA polymerase activity that can copy either DNA or RNA templates, and a ribonuclease H (RNase H) activity that cleaves the RNA strand of RNA-DNA heteroduplexes in a partially processive 3'- to 5'-endonucleasic mode. Neo-synthesized pregenomic RNA (pgRNA) are encapsidated together with the P protein, and reverse-transcribed inside the nucleocapsid. Initiation of reverse-transcription occurs first by binding the epsilon loop on the pgRNA genome, and is initiated by protein priming, thereby the 5'-end of (-)DNA is covalently linked to P protein. Partial (+)DNA is synthesized from the (-)DNA template and generates the relaxed circular DNA (RC-DNA) genome. After budding and infection, the RC-DNA migrates in the nucleus, and is converted into a plasmid-like covalently closed circular DNA (cccDNA). The activity of P protein does not seem to be necessary for cccDNA generation, and is presumably released from (+)DNA by host nuclear DNA repair machinery. This chain is Protein P, found in Homo sapiens (Human).